The following is a 50-amino-acid chain: Defensin D4 (50 aa).

Intrachain disulfides connect Cys-3/Cys-50, Cys-14/Cys-35, Cys-20/Cys-44, and Cys-24/Cys-46.

As to expression, detected in seeds (at protein level).

Its subcellular location is the secreted. Antimicrobial peptide with antifungal activity. This Nigella sativa (Black cumin) protein is Defensin D4.